A 450-amino-acid chain; its full sequence is Phosphoglucosamine mutase (450 aa).

S102 acts as the Phosphoserine intermediate in catalysis. Mg(2+) contacts are provided by S102, D244, D246, and D248. At S102 the chain carries Phosphoserine.

This sequence belongs to the phosphohexose mutase family. The cofactor is Mg(2+). Activated by phosphorylation.

The enzyme catalyses alpha-D-glucosamine 1-phosphate = D-glucosamine 6-phosphate. Its function is as follows. Catalyzes the conversion of glucosamine-6-phosphate to glucosamine-1-phosphate. This Nitratidesulfovibrio vulgaris (strain DSM 19637 / Miyazaki F) (Desulfovibrio vulgaris) protein is Phosphoglucosamine mutase.